The sequence spans 734 residues: Ribosomal RNA large subunit methyltransferase K/L (734 aa).

The region spanning 49 to 167 (QAYRVCMWSR…KTEHTYCLDL (119 aa)) is the THUMP domain.

It belongs to the methyltransferase superfamily. RlmKL family.

It is found in the cytoplasm. The enzyme catalyses guanosine(2445) in 23S rRNA + S-adenosyl-L-methionine = N(2)-methylguanosine(2445) in 23S rRNA + S-adenosyl-L-homocysteine + H(+). It carries out the reaction guanosine(2069) in 23S rRNA + S-adenosyl-L-methionine = N(2)-methylguanosine(2069) in 23S rRNA + S-adenosyl-L-homocysteine + H(+). In terms of biological role, specifically methylates the guanine in position 2445 (m2G2445) and the guanine in position 2069 (m7G2069) of 23S rRNA. The polypeptide is Ribosomal RNA large subunit methyltransferase K/L (Acinetobacter baylyi (strain ATCC 33305 / BD413 / ADP1)).